The sequence spans 116 residues: Large ribosomal subunit protein bL20c (116 aa).

Belongs to the bacterial ribosomal protein bL20 family.

Its subcellular location is the plastid. It is found in the chloroplast. Functionally, binds directly to 23S ribosomal RNA and is necessary for the in vitro assembly process of the 50S ribosomal subunit. It is not involved in the protein synthesizing functions of that subunit. The sequence is that of Large ribosomal subunit protein bL20c from Oltmannsiellopsis viridis (Marine flagellate).